A 208-amino-acid chain; its full sequence is 3-isopropylmalate dehydratase small subunit (208 aa).

Belongs to the LeuD family. LeuD type 1 subfamily. As to quaternary structure, heterodimer of LeuC and LeuD.

It carries out the reaction (2R,3S)-3-isopropylmalate = (2S)-2-isopropylmalate. It participates in amino-acid biosynthesis; L-leucine biosynthesis; L-leucine from 3-methyl-2-oxobutanoate: step 2/4. Functionally, catalyzes the isomerization between 2-isopropylmalate and 3-isopropylmalate, via the formation of 2-isopropylmaleate. The chain is 3-isopropylmalate dehydratase small subunit from Granulibacter bethesdensis (strain ATCC BAA-1260 / CGDNIH1).